A 209-amino-acid chain; its full sequence is Ribosomal RNA large subunit methyltransferase E (209 aa).

Residues Gly-63, Trp-65, Asp-83, Asp-99, and Asp-124 each contribute to the S-adenosyl-L-methionine site. Lys-164 acts as the Proton acceptor in catalysis.

This sequence belongs to the class I-like SAM-binding methyltransferase superfamily. RNA methyltransferase RlmE family.

The protein localises to the cytoplasm. The enzyme catalyses uridine(2552) in 23S rRNA + S-adenosyl-L-methionine = 2'-O-methyluridine(2552) in 23S rRNA + S-adenosyl-L-homocysteine + H(+). In terms of biological role, specifically methylates the uridine in position 2552 of 23S rRNA at the 2'-O position of the ribose in the fully assembled 50S ribosomal subunit. The protein is Ribosomal RNA large subunit methyltransferase E of Shewanella frigidimarina (strain NCIMB 400).